Consider the following 234-residue polypeptide: 1-(5-phosphoribosyl)-5-[(5-phosphoribosylamino)methylideneamino] imidazole-4-carboxamide isomerase (234 aa).

Aspartate 9 serves as the catalytic Proton acceptor. The Proton donor role is filled by aspartate 131.

The protein belongs to the HisA/HisF family.

The protein localises to the cytoplasm. It carries out the reaction 1-(5-phospho-beta-D-ribosyl)-5-[(5-phospho-beta-D-ribosylamino)methylideneamino]imidazole-4-carboxamide = 5-[(5-phospho-1-deoxy-D-ribulos-1-ylimino)methylamino]-1-(5-phospho-beta-D-ribosyl)imidazole-4-carboxamide. Its pathway is amino-acid biosynthesis; L-histidine biosynthesis; L-histidine from 5-phospho-alpha-D-ribose 1-diphosphate: step 4/9. This chain is 1-(5-phosphoribosyl)-5-[(5-phosphoribosylamino)methylideneamino] imidazole-4-carboxamide isomerase, found in Staphylococcus epidermidis (strain ATCC 35984 / DSM 28319 / BCRC 17069 / CCUG 31568 / BM 3577 / RP62A).